Reading from the N-terminus, the 236-residue chain is Phosphoribosylaminoimidazole-succinocarboxamide synthase (236 aa).

The protein belongs to the SAICAR synthetase family.

It catalyses the reaction 5-amino-1-(5-phospho-D-ribosyl)imidazole-4-carboxylate + L-aspartate + ATP = (2S)-2-[5-amino-1-(5-phospho-beta-D-ribosyl)imidazole-4-carboxamido]succinate + ADP + phosphate + 2 H(+). It functions in the pathway purine metabolism; IMP biosynthesis via de novo pathway; 5-amino-1-(5-phospho-D-ribosyl)imidazole-4-carboxamide from 5-amino-1-(5-phospho-D-ribosyl)imidazole-4-carboxylate: step 1/2. This Pseudomonas aeruginosa (strain LESB58) protein is Phosphoribosylaminoimidazole-succinocarboxamide synthase.